Consider the following 787-residue polypeptide: Mitochondrial intermediate peptidase (787 aa).

A mitochondrion-targeting transit peptide spans 1–36; it reads MQNKVLRGILFKNVPLGYSYNRSIRHPTFGNSIIRW. His-573 is a binding site for Zn(2+). Residue Glu-574 is part of the active site. Residues His-577 and His-580 each coordinate Zn(2+).

The protein belongs to the peptidase M3 family. Zn(2+) is required as a cofactor.

Its subcellular location is the mitochondrion matrix. The catalysed reaction is Release of an N-terminal octapeptide as second stage of processing of some proteins imported into the mitochondrion.. Cleaves proteins, imported into the mitochondrion, to their mature size. While most mitochondrial precursor proteins are processed to the mature form in one step by mitochondrial processing peptidase (MPP), the sequential cleavage by MIP of an octapeptide after initial processing by MPP is a required step for a subgroup of nuclear-encoded precursor proteins destined for the matrix or the inner membrane. This Vanderwaltozyma polyspora (strain ATCC 22028 / DSM 70294 / BCRC 21397 / CBS 2163 / NBRC 10782 / NRRL Y-8283 / UCD 57-17) (Kluyveromyces polysporus) protein is Mitochondrial intermediate peptidase (OCT1).